Reading from the N-terminus, the 317-residue chain is UAP56-interacting factor (317 aa).

Met-1 bears the N-acetylmethionine mark. The tract at residues 1–26 (MNRFGTRLVGATATPPPPPKARSNEN) is disordered. The residue at position 14 (Thr-14) is a Phosphothreonine. Ser-23 bears the Phosphoserine mark. The UAP56-binding motif motif lies at 26–44 (NLDKIDMSLDDIIKLNRKE). Residues Ser-60 and Ser-117 each carry the phosphoserine modification. A Glycyl lysine isopeptide (Lys-Gly) (interchain with G-Cter in SUMO1) cross-link involves residue Lys-139. A Glycyl lysine isopeptide (Lys-Gly) (interchain with G-Cter in SUMO2) cross-link involves residue Lys-260.

It belongs to the UIF family. As to quaternary structure, interacts with DDX39B/UAP56 and NXF1; interaction with DDX39B/UAP56 and NXF1 are mutually exclusive. Interacts with SSRP1; required for its recruitment to mRNAs. Interacts with CHTOP.

It is found in the nucleus. Its subcellular location is the nucleoplasm. It localises to the nucleus speckle. Its function is as follows. Required for mRNA export from the nucleus to the cytoplasm. Acts as an adapter that uses the DDX39B/UAP56-NFX1 pathway to ensure efficient mRNA export and delivering to the nuclear pore. Associates with spliced and unspliced mRNAs simultaneously with ALYREF/THOC4. In Mus musculus (Mouse), this protein is UAP56-interacting factor (Fyttd1).